Here is a 205-residue protein sequence, read N- to C-terminus: Probable DNA-binding protein (205 aa).

Positions 140–168 (GEGDGAPRPACPDFSTRGAETGNQGVQPG) are disordered.

This chain is Probable DNA-binding protein, found in Homo sapiens (Human).